The following is a 331-amino-acid chain: UPF0194 membrane protein YbhG (331 aa).

A signal peptide spans 1-19; sequence MKKPVVIGLAIAAIVAVIA. A coiled-coil region spans residues 107-208; that stretch reads EEIAQAAAAV…LDLQDTTLIA (102 aa).

Belongs to the UPF0194 family.

It localises to the periplasm. The polypeptide is UPF0194 membrane protein YbhG (Salmonella agona (strain SL483)).